Here is a 201-residue protein sequence, read N- to C-terminus: GTP cyclohydrolase 1 (201 aa).

Positions 90, 93, and 163 each coordinate Zn(2+).

This sequence belongs to the GTP cyclohydrolase I family. As to quaternary structure, toroid-shaped homodecamer, composed of two pentamers of five dimers.

It catalyses the reaction GTP + H2O = 7,8-dihydroneopterin 3'-triphosphate + formate + H(+). The protein operates within cofactor biosynthesis; 7,8-dihydroneopterin triphosphate biosynthesis; 7,8-dihydroneopterin triphosphate from GTP: step 1/1. The protein is GTP cyclohydrolase 1 of Streptomyces avermitilis (strain ATCC 31267 / DSM 46492 / JCM 5070 / NBRC 14893 / NCIMB 12804 / NRRL 8165 / MA-4680).